The chain runs to 105 residues: Large ribosomal subunit protein uL24 (105 aa).

This sequence belongs to the universal ribosomal protein uL24 family. Part of the 50S ribosomal subunit.

In terms of biological role, one of two assembly initiator proteins, it binds directly to the 5'-end of the 23S rRNA, where it nucleates assembly of the 50S subunit. Its function is as follows. One of the proteins that surrounds the polypeptide exit tunnel on the outside of the subunit. The polypeptide is Large ribosomal subunit protein uL24 (Xanthomonas axonopodis pv. citri (strain 306)).